Consider the following 880-residue polypeptide: Valine--tRNA ligase (880 aa).

Residues 49–59 (PNVTGKLHLGH) carry the 'HIGH' region motif. The 'KMSKS' region signature appears at 525 to 529 (KMSKS). K528 contributes to the ATP binding site. Positions 809-880 (LEGLINIEEE…VKARLAELKR (72 aa)) form a coiled coil.

This sequence belongs to the class-I aminoacyl-tRNA synthetase family. ValS type 1 subfamily. As to quaternary structure, monomer.

The protein resides in the cytoplasm. It catalyses the reaction tRNA(Val) + L-valine + ATP = L-valyl-tRNA(Val) + AMP + diphosphate. Its function is as follows. Catalyzes the attachment of valine to tRNA(Val). As ValRS can inadvertently accommodate and process structurally similar amino acids such as threonine, to avoid such errors, it has a 'posttransfer' editing activity that hydrolyzes mischarged Thr-tRNA(Val) in a tRNA-dependent manner. The protein is Valine--tRNA ligase (valS) of Geobacillus stearothermophilus (Bacillus stearothermophilus).